Reading from the N-terminus, the 123-residue chain is Ribonuclease P protein component (123 aa).

This sequence belongs to the RnpA family. Consists of a catalytic RNA component (M1 or rnpB) and a protein subunit.

It carries out the reaction Endonucleolytic cleavage of RNA, removing 5'-extranucleotides from tRNA precursor.. In terms of biological role, RNaseP catalyzes the removal of the 5'-leader sequence from pre-tRNA to produce the mature 5'-terminus. It can also cleave other RNA substrates such as 4.5S RNA. The protein component plays an auxiliary but essential role in vivo by binding to the 5'-leader sequence and broadening the substrate specificity of the ribozyme. The chain is Ribonuclease P protein component from Streptococcus pneumoniae serotype 4 (strain ATCC BAA-334 / TIGR4).